Reading from the N-terminus, the 395-residue chain is MTHTLYPTPFALYPINISAAWHLGPLPVSCFVSNKYQCSLAFGATTGLRVLVVVVPQTQLSFLSSLCLVSLFLHSLVSAHGEKPTKPVGLDPTLFQVVVGILGNFSLLYYYMFLYFRGYKPRSTDLILRHLTVADSLVILSKRIPETMATFGLKHFDNYFGCKFLLYAHRVGRGVSIGSTCLLSVFQVITINPRNSRWAEMKVKAPTYIGLSNILCWAFHMLVNAIFPIYTTGKWSNNNITKKGDLGYCSAPLSDEVTKSVYAALTSFHDVLCLGLMLWASSSIVLVLYRHKQQVQHICRNNLYPNSSPGNRAIQSILALVSTFALCYALSFITYVYLALFDNSSWWLVNTAALIIACFPTISPFVLMCRDPSRSRLCSICCRRNRRFFHDFRKM.

The helical transmembrane segment at leucine 12 to valine 32 threads the bilayer. Residues serine 33–leucine 51 lie on the Extracellular side of the membrane. The helical transmembrane segment at valine 52–phenylalanine 72 threads the bilayer. Over leucine 73 to threonine 93 the chain is Cytoplasmic. The helical transmembrane segment at leucine 94–leucine 114 threads the bilayer. Topologically, residues tyrosine 115–arginine 170 are extracellular. The chain crosses the membrane as a helical span at residues valine 171 to isoleucine 191. Topologically, residues asparagine 192–tyrosine 208 are cytoplasmic. The chain crosses the membrane as a helical span at residues isoleucine 209 to isoleucine 229. Residues tyrosine 230–serine 267 are Extracellular-facing. Asparagine 239 is a glycosylation site (N-linked (GlcNAc...) asparagine). The chain crosses the membrane as a helical span at residues phenylalanine 268–leucine 288. Over tyrosine 289–serine 316 the chain is Cytoplasmic. The helical transmembrane segment at isoleucine 317–tyrosine 337 threads the bilayer. The Extracellular segment spans residues leucine 338–tryptophan 346. Residue asparagine 343 is glycosylated (N-linked (GlcNAc...) asparagine). The chain crosses the membrane as a helical span at residues tryptophan 347 to leucine 367. Over methionine 368–methionine 395 the chain is Cytoplasmic.

Belongs to the G-protein coupled receptor 1 family.

The protein localises to the cell membrane. Its function is as follows. Putative pheromone receptor. This is Vomeronasal type-1 receptor 2 (VN1R2) from Homo sapiens (Human).